Here is a 202-residue protein sequence, read N- to C-terminus: Dephospho-CoA kinase (202 aa).

One can recognise a DPCK domain in the interval 4–202 (FLGLTGGIAT…EGVCHKSGMS (199 aa)). Position 12–17 (12–17 (ATGKTT)) interacts with ATP.

Belongs to the CoaE family.

Its subcellular location is the cytoplasm. The catalysed reaction is 3'-dephospho-CoA + ATP = ADP + CoA + H(+). Its pathway is cofactor biosynthesis; coenzyme A biosynthesis; CoA from (R)-pantothenate: step 5/5. In terms of biological role, catalyzes the phosphorylation of the 3'-hydroxyl group of dephosphocoenzyme A to form coenzyme A. The chain is Dephospho-CoA kinase from Latilactobacillus sakei subsp. sakei (strain 23K) (Lactobacillus sakei subsp. sakei).